Consider the following 198-residue polypeptide: Na(+)-translocating NADH-quinone reductase subunit E (198 aa).

Transmembrane regions (helical) follow at residues 11-31, 39-59, 77-97, 110-130, 140-160, and 176-196; these read SIFI…FLAV, FGLG…NNLV, FLNF…LEMI, GIFL…SFMV, IVYG…LAGI, and LGIT…FSGV.

This sequence belongs to the NqrDE/RnfAE family. In terms of assembly, composed of six subunits; NqrA, NqrB, NqrC, NqrD, NqrE and NqrF.

The protein resides in the cell inner membrane. It catalyses the reaction a ubiquinone + n Na(+)(in) + NADH + H(+) = a ubiquinol + n Na(+)(out) + NAD(+). In terms of biological role, NQR complex catalyzes the reduction of ubiquinone-1 to ubiquinol by two successive reactions, coupled with the transport of Na(+) ions from the cytoplasm to the periplasm. NqrA to NqrE are probably involved in the second step, the conversion of ubisemiquinone to ubiquinol. This Photobacterium profundum (strain SS9) protein is Na(+)-translocating NADH-quinone reductase subunit E.